Consider the following 342-residue polypeptide: MTTIFAIETSCDESAAAIVRGRTVVASIIASQIDVHRLTGGVVPEVASREHLQALGGVIAACFAEGGLGWADIDAVAFTCAPGLVGSLLMGSMAAKTLALVHARPLVGIHHLEGHIYSAFLSDPALEPPFLCLLVSGGHTSLVAVEDHGRYRILGRTRDDAVGEAYDKVARVLGLGYPGGPAIDKLAQRGDPRAFALPGGRVESPFDTSFSGLKTAVLRLAEKHRLQRLPIDRADLAASFQRTVVETLAERVELALAHTGYDTVVVAGGVSANRGLRERLGQAGPYRAVFPPMHFCTDNAAMIACAGVARFERGFRSSLDLPVQSRLSLEACDSLYQCLPVP.

Histidine 111 and histidine 115 together coordinate Fe cation. Residues 134–138 (LVSGG), aspartate 167, glycine 180, aspartate 184, and asparagine 273 contribute to the substrate site. Aspartate 298 contacts Fe cation.

The protein belongs to the KAE1 / TsaD family. Fe(2+) is required as a cofactor.

It localises to the cytoplasm. It catalyses the reaction L-threonylcarbamoyladenylate + adenosine(37) in tRNA = N(6)-L-threonylcarbamoyladenosine(37) in tRNA + AMP + H(+). Required for the formation of a threonylcarbamoyl group on adenosine at position 37 (t(6)A37) in tRNAs that read codons beginning with adenine. Is involved in the transfer of the threonylcarbamoyl moiety of threonylcarbamoyl-AMP (TC-AMP) to the N6 group of A37, together with TsaE and TsaB. TsaD likely plays a direct catalytic role in this reaction. The chain is tRNA N6-adenosine threonylcarbamoyltransferase from Gloeobacter violaceus (strain ATCC 29082 / PCC 7421).